Here is a 443-residue protein sequence, read N- to C-terminus: Histidinol dehydrogenase (443 aa).

NAD(+) is bound by residues tyrosine 133, glutamine 191, and asparagine 214. Substrate-binding residues include serine 240, glutamine 262, and histidine 265. Zn(2+)-binding residues include glutamine 262 and histidine 265. Residues glutamate 329 and histidine 330 each act as proton acceptor in the active site. Residues histidine 330, aspartate 363, glutamate 417, and histidine 422 each coordinate substrate. Aspartate 363 contacts Zn(2+). Position 422 (histidine 422) interacts with Zn(2+).

The protein belongs to the histidinol dehydrogenase family. In terms of assembly, homodimer. Zn(2+) is required as a cofactor.

The enzyme catalyses L-histidinol + 2 NAD(+) + H2O = L-histidine + 2 NADH + 3 H(+). The protein operates within amino-acid biosynthesis; L-histidine biosynthesis; L-histidine from 5-phospho-alpha-D-ribose 1-diphosphate: step 9/9. In terms of biological role, catalyzes the sequential NAD-dependent oxidations of L-histidinol to L-histidinaldehyde and then to L-histidine. The protein is Histidinol dehydrogenase of Blochmanniella pennsylvanica (strain BPEN).